A 126-amino-acid chain; its full sequence is L-alanine exporter AlaE (126 aa).

Residues 23–43 (FALVVYCFFTGMAIEILLSGM) form a helical membrane-spanning segment.

It belongs to the AlaE exporter family.

Its subcellular location is the cell inner membrane. In terms of biological role, exports L-alanine. The sequence is that of L-alanine exporter AlaE from Sodalis glossinidius (strain morsitans).